The primary structure comprises 342 residues: Phosphate acyltransferase (342 aa).

This sequence belongs to the PlsX family. Homodimer. Probably interacts with PlsY.

The protein resides in the cytoplasm. It catalyses the reaction a fatty acyl-[ACP] + phosphate = an acyl phosphate + holo-[ACP]. It functions in the pathway lipid metabolism; phospholipid metabolism. Functionally, catalyzes the reversible formation of acyl-phosphate (acyl-PO(4)) from acyl-[acyl-carrier-protein] (acyl-ACP). This enzyme utilizes acyl-ACP as fatty acyl donor, but not acyl-CoA. This Leuconostoc mesenteroides subsp. mesenteroides (strain ATCC 8293 / DSM 20343 / BCRC 11652 / CCM 1803 / JCM 6124 / NCDO 523 / NBRC 100496 / NCIMB 8023 / NCTC 12954 / NRRL B-1118 / 37Y) protein is Phosphate acyltransferase.